The following is a 1296-amino-acid chain: Nuclear factor related to kappa-B-binding protein (1296 aa).

The 118-residue stretch at proline 39–aspartate 156 folds into the DEUBAD domain. Disordered regions lie at residues glycine 165–tryptophan 186 and glycine 204–proline 232. Positions serine 216 to proline 232 are enriched in low complexity. Serine 228 and serine 298 each carry phosphoserine. Lysine 327 is covalently cross-linked (Glycyl lysine isopeptide (Lys-Gly) (interchain with G-Cter in SUMO2)). Serine 351 is subject to Phosphoserine. Positions leucine 370–aspartate 495 are winged-helix like domain. Lysine 469 participates in a covalent cross-link: Glycyl lysine isopeptide (Lys-Gly) (interchain with G-Cter in SUMO2). A Glycyl lysine isopeptide (Lys-Gly) (interchain with G-Cter in SUMO1); alternate cross-link involves residue lysine 488. Lysine 488 is covalently cross-linked (Glycyl lysine isopeptide (Lys-Gly) (interchain with G-Cter in SUMO2); alternate). Disordered regions lie at residues glutamine 663–valine 758 and histidine 1015–threonine 1036. Low complexity predominate over residues proline 700–methionine 713. Pro residues predominate over residues proline 726 to valine 737. Residues asparagine 741–valine 758 are compositionally biased toward polar residues. A compositionally biased stretch (low complexity) spans alanine 1016–alanine 1034. Serine 1019 bears the Phosphoserine mark. Lysine 1234 carries the post-translational modification N6-acetyllysine. Serine 1288 carries the post-translational modification Phosphoserine.

The protein belongs to the NFRKB family. As to quaternary structure, component of the chromatin remodeling INO80 complex; specifically part of a complex module associated with the N-terminus of INO80. Interacts with UCHL5.

Its subcellular location is the nucleus. In terms of biological role, binds to the DNA consensus sequence 5'-GGGGAATCTCC-3'. Its function is as follows. Putative regulatory component of the chromatin remodeling INO80 complex which is involved in transcriptional regulation, DNA replication and probably DNA repair. Modulates the deubiquitinase activity of UCHL5 in the INO80 complex. The sequence is that of Nuclear factor related to kappa-B-binding protein (Nfrkb) from Mus musculus (Mouse).